The following is a 653-amino-acid chain: Extracellular metalloproteinase (653 aa).

A signal peptide spans 1-19; that stretch reads MRSFLLASLASLSVISVYG. The propeptide occupies 20 to 244; it reads HPHARSTLTR…VHAVVDYSAD (225 aa). Asparagine 327, asparagine 336, and asparagine 412 each carry an N-linked (GlcNAc...) asparagine glycan. Histidine 429 lines the Zn(2+) pocket. Residue glutamate 430 is part of the active site. A Zn(2+)-binding site is contributed by histidine 433. 2 N-linked (GlcNAc...) asparagine glycosylation sites follow: asparagine 636 and asparagine 637.

Belongs to the peptidase M36 family. Zn(2+) serves as cofactor.

The protein localises to the secreted. Its function is as follows. Secreted metalloproteinase that allows assimilation of proteinaceous substrates. This is Extracellular metalloproteinase (MEP) from Pyrenophora tritici-repentis (strain Pt-1C-BFP) (Wheat tan spot fungus).